We begin with the raw amino-acid sequence, 1135 residues long: Integrin alpha-7 (1135 aa).

Positions 1 to 33 (MARIPRCDFLGLPGICYLLSFLLAGLLLPRASA) are cleaved as a signal peptide. Over 34 to 1036 (FNLDVMGAIR…VAVVAEGVPW (1003 aa)) the chain is Extracellular. 7 FG-GAP repeats span residues 38-103 (VMGA…ETDC), 110-165 (RGAN…RCFV), 185-238 (EGRP…DPDQ), 248-305 (DRLT…ASRL), 306-367 (IPEV…HWAD), 368-423 (ISPL…GVVT), and 427-486 (QVLE…IDPR). N86 is a glycosylation site (N-linked (GlcNAc...) asparagine). Cystine bridges form between C94/C103, C140/C163, and C184/C197. Residues D328, N330, D332, D336, D390, N392, D394, D398, D448, D450, N452, Y454, and D456 each coordinate Ca(2+). Intrachain disulfides connect C495–C502, C508–C571, C637–C643, C736–C747, C894–C948, and C955–C960. N-linked (GlcNAc...) asparagine glycosylation occurs at N741. A compositionally biased stretch (basic and acidic residues) spans 905–916 (VDSRDRRRRELG). Residues 905–933 (VDSRDRRRRELGQPEPQEPPEKVEPSTSW) are disordered. A glycan (N-linked (GlcNAc...) asparagine) is linked at N943. Residues N979 and N999 are each glycosylated (N-linked (GlcNAc...) asparagine). A helical membrane pass occupies residues 1037 to 1057 (WVILLAVLAGLLVLALLVLLL). Residues 1058 to 1135 (WKLGFFKRAK…PDGHPVSVTA (78 aa)) lie on the Cytoplasmic side of the membrane. Residues 1061 to 1065 (GFFKR) carry the GFFKR motif motif. 3 tandem repeats follow at residues 1111–1114 (DAHP), 1119–1122 (DWHP), and 1127–1130 (DGHP). Residues 1111 to 1130 (DAHPILAADWHPELGPDGHP) are 3 X 4 AA repeats of D-X-H-P.

It belongs to the integrin alpha chain family. In terms of assembly, interacts (via C-terminus intracellular tail region) with CIB1; the interaction is stabilized/increased in a calcium- and magnesium-dependent manner. Heterodimer of an alpha and a beta subunit. The alpha subunit is composed of a heavy and a light chain linked by a disulfide bond. Alpha-7 associates with beta-1. Interacts with COMP. Post-translationally, ADP-ribosylated on at least two sites of the extracellular domain in skeletal myotubes. In terms of processing, a 70 kDa form is created by proteolytic cleavage. Cleavage is elevated during myogenic differentiation and the cleaved form enhances cell adhesion and spreading on laminin. Expressed in skeletal and cardiac muscle. Expressed in replicating myoblasts. In differentiated muscle fibers localizes between fibers and the surrounding matrix. Isoform Alpha-7X1A and isoform Alpha-7X1B are expressed at myotendinous and neuromuscular junctions; isoform Alpha-7X1C is expressed at neuromuscular junctions and at extrasynaptic sites.

The protein resides in the membrane. Its function is as follows. Integrin alpha-7/beta-1 is the primary laminin receptor on skeletal myoblasts and adult myofibers. During myogenic differentiation, it may induce changes in the shape and mobility of myoblasts, and facilitate their localization at laminin-rich sites of secondary fiber formation. Involved in the maintenance of the myofibers cytoarchitecture as well as for their anchorage, viability and functional integrity. Required to promote contractile phenotype acquisition in differentiated airway smooth muscle (ASM) cells. Acts as a Schwann cell receptor for laminin-2. Acts as a receptor of COMP and mediates its effect on vascular smooth muscle cells (VSMCs) maturation. The chain is Integrin alpha-7 (Itga7) from Rattus norvegicus (Rat).